A 156-amino-acid chain; its full sequence is Transcriptional repressor NrdR (156 aa).

The segment at 3–34 (CPKCNSTHSRVVDSRHADEANAIRRRRECENC) is a zinc-finger region. The ATP-cone domain occupies 49-139 (LIVVKKDGTR…VYKEFKDVDQ (91 aa)).

The protein belongs to the NrdR family. Zn(2+) serves as cofactor.

Its function is as follows. Negatively regulates transcription of bacterial ribonucleotide reductase nrd genes and operons by binding to NrdR-boxes. In Staphylococcus epidermidis (strain ATCC 35984 / DSM 28319 / BCRC 17069 / CCUG 31568 / BM 3577 / RP62A), this protein is Transcriptional repressor NrdR.